We begin with the raw amino-acid sequence, 500 residues long: Cytochrome P450 2D28 (500 aa).

Cysteine 446 provides a ligand contact to heme.

It belongs to the cytochrome P450 family. Heme serves as cofactor.

The protein resides in the endoplasmic reticulum membrane. It is found in the microsome membrane. The chain is Cytochrome P450 2D28 (CYP2D28A) from Mesocricetus auratus (Golden hamster).